A 57-amino-acid polypeptide reads, in one-letter code: Small hydrophobic protein (57 aa).

At 1–8 (MPAIQPPL) the chain is on the virion surface side. A helical transmembrane segment spans residues 9–29 (YLTFLLLMLLYRIITLYVWSL). Residues 30–57 (STITYKTSVRHASLYQRSFFRWSVDHSL) are Intravirion-facing.

It belongs to the rubulavirus small hydrophobic protein family. Interacts with host TNFRSF1A, RIPK1 and IRAK1; these interactions interfere with host NF-kappa-B activation at the level of receptor complexes. Interacts with host protein UBQLN4.

The protein localises to the virion membrane. It is found in the host cell membrane. Functionally, plays a role in the inhibition of the host NF-kappa-B pathway. This inhibition occurs at the receptor level, by preventing the signaling of TNFR1 as well as IL-1R and TLR3. The sequence is that of Small hydrophobic protein (SH) from Mumps virus (strain Edingburgh 4) (MuV).